We begin with the raw amino-acid sequence, 520 residues long: MKMTSIQQRAELHRQIWQIANDVRGSVDGWDFKQYVLGALFYRFISENFSSYIEAGDDSICYAKLDDSVITDDIKDDAIKTKGYFIYPSQLFCNVAAKANTNDRLNADLNSIFVAIESSAYGYPSEADIKGLFADFDTTSNRLGNTVKDKNARLAAVLKGVEGLKLGDFNEHQIDLFGDAYEFLISNYAANAGKSGGEFFTPQHVSKLIAQLAMHGQTHVNKIYDPAAGSGSLLLQAKKQFDNHIIEEGFFGQEINHTTYNLARMNMFLHNINYDKFDIKLGNTLTEPHFRDEKPFDAIVSNPPYSVKWIGSDDPTLINDERFAPAGVLAPKSKADFAFVLHALNYLSAKGRAAIVCFPGIFYRGGAEQKIRQYLVDNNYVETVISLAPNLFFGTTIAVNILVLSKHKTDTNVQFIDASELFKKETNNNILTDAHIEQIMQVFASKEDVAHLAKSVAFETVVANDYNLSVSSYVEAKDNREIIDIAELNAELKTTVSKIDQLRKDIDAIVAEIEGCEVQK.

Positions 10–190 are N-terminal domain; sequence AELHRQIWQI…YEFLISNYAA (181 aa). S-adenosyl-L-methionine contacts are provided by residues 198 to 203, 230 to 232, and glutamate 254; these read EFFTPQ and SGS. Residues 198 to 473 are catalytic domain; that stretch reads EFFTPQHVSK…NDYNLSVSSY (276 aa). A C-terminal tail region spans residues 481–510; that stretch reads EIIDIAELNAELKTTVSKIDQLRKDIDAIV.

This sequence belongs to the N(4)/N(6)-methyltransferase family. The type I restriction/modification system is composed of three polypeptides R, M and S; the restriction enzyme has stoichiometry R(2)M(2)S(1) while the methyltransferase is M(2)S(1). There is an equilibrium between R(2)M(2)S(1) and R(1)M(2)S(1); the latter is methylation and translocation proficient but restriction deficient. In terms of assembly, (Microbial infection) Holoenenzyme interacts with Escherichia phage T7 protein Ocr; this interaction leads to the inhibition of the restriction activity, but may still allow methylation and translocation.

The enzyme catalyses a 2'-deoxyadenosine in DNA + S-adenosyl-L-methionine = an N(6)-methyl-2'-deoxyadenosine in DNA + S-adenosyl-L-homocysteine + H(+). In terms of biological role, the subtype gamma methyltransferase (M) subunit of a type I restriction enzyme. The M and S subunits together form a methyltransferase (MTase) that methylates A-3 on the top and bottom strand of the sequence 5'-GAAN(6)RTCG-3' (for EcoR124I) and 5'-GAAN(7)RTCG-3' (for EcoR124II). In the presence of the R subunit the complex can also act as an endonuclease, binding to the same target sequence but cutting the DNA some distance from this site. Whether the DNA is cut or modified depends on the methylation state of the target sequence. When the target site is unmodified, the DNA is cut. When the target site is hemimethylated, the complex acts as a maintenance MTase modifying the DNA so that both strands become methylated. After locating a non-methylated recognition site, the enzyme complex serves as a molecular motor that translocates DNA in an ATP-dependent manner until a collision occurs that triggers cleavage. The R(1)M(2)S(1) complex translocates an average of 555 bp/second on nicked DNA; the R(2)M(2)S(1) complex translocates at double that speed. The 2 R subunit motors are independent and track along the helical pitch of the DNA, inducing positive supercoiling ahead of themselves. This chain is Type I restriction enzyme EcoR124I/EcoR124II methylase subunit (hsdM), found in Escherichia coli.